Reading from the N-terminus, the 261-residue chain is Protein TfpB (261 aa).

The sequence is that of Protein TfpB (tfpB) from Moraxella bovis.